We begin with the raw amino-acid sequence, 406 residues long: Immediate early response gene 5-like protein (406 aa).

2 disordered regions span residues 166-195 (QPPHGAPHRGQHLEPLQPGPAPLPPPAPAA) and 216-235 (AAPSTVAASSPPASTAPSSS). Over residues 182 to 193 (QPGPAPLPPPAP) the composition is skewed to pro residues.

The protein belongs to the IER family.

This chain is Immediate early response gene 5-like protein (Ier5l), found in Mus musculus (Mouse).